A 436-amino-acid chain; its full sequence is Voltage-gated potassium channel regulatory subunit KCNG3 (436 aa).

Residues 1–168 lie on the Cytoplasmic side of the membrane; the sequence is MTFGRSGAAS…RTFEEPTSSL (168 aa). The helical transmembrane segment at 169-190 threads the bilayer; sequence AAQILASVSVVFVIVSMVVLCA. The Extracellular segment spans residues 191 to 220; it reads STLPDWRNAAADNRSLDDRSRYSAGPGREP. A helical transmembrane segment spans residues 221-242; it reads SGIIEAICIGWFTAECIVRFIV. The Cytoplasmic segment spans residues 243 to 253; sequence SKNKCEFVKRP. The helical transmembrane segment at 254 to 274 threads the bilayer; the sequence is LNIIDLLAITPYYISVLMTVF. Residues 275 to 284 are Extracellular-facing; sequence TGENSQLQRA. Residues 285-305 traverse the membrane as a helical; Voltage-sensor segment; that stretch reads GVTLRVLRMMRIFWVIKLARH. The Cytoplasmic portion of the chain corresponds to 306 to 320; the sequence is FIGLQTLGLTLKRCY. Residues 321 to 342 form a helical membrane-spanning segment; it reads REMVMLLVFICVAMAIFSALSQ. Residues 343-360 lie on the Extracellular side of the membrane; the sequence is LLEHGLDLETSNKDFTSI. The helical intramembrane region spans 361–372; that stretch reads PAACWWVIISMT. The short motif at 373-378 is the Selectivity filter element; the sequence is TVGYGD. An intramembrane segment occupies 373–380; it reads TVGYGDMY. At 381-387 the chain is on the extracellular side; it reads PITVPGR. A helical membrane pass occupies residues 388-416; sequence ILGGVCVVSGIVLLALPITFIYHSFVQCY. Topologically, residues 417-436 are cytoplasmic; sequence HELKFRSARYSRSLSTEFLN.

The protein belongs to the potassium channel family. G (TC 1.A.1.2) subfamily. Kv6.3/KCNG3 sub-subfamily. In terms of assembly, heterotetramer with KCNB1. Does not form homomultimers. In terms of tissue distribution, expressed in the brain, liver, testis, small intestine, colon, thymus and adrenal gland.

The protein resides in the cell membrane. It is found in the cytoplasm. Regulatory subunit of the voltage-gated potassium (Kv) channel which, when coassembled with KCNB1, modulates the kinetics parameters of the heterotetrameric channel namely the inactivation and deactivation rate. Potassium channel subunit that does not form functional channels by itself. Reduces the deactivation rate. Moderately accelerates activation. The protein is Voltage-gated potassium channel regulatory subunit KCNG3 of Homo sapiens (Human).